A 555-amino-acid chain; its full sequence is MQAVANKPVAELVDYRTEPSKYRHWSLATDGEIATLTLNIDEDGGIRPGYKLKLNSYDLGVDIELHDALQRVRFEHPEVRTVVVTSGKPKIFCSGANIYMLGLSTHAWKVNFCKFTNETRNGIEDSSQYSGLKFLAACNGTTAGGGYELALACDEIVLVDDRNSSVSLPEVPLLGVLPGTGGLTRVTDKRRVRRDHADIFCTISEGVRGQRAKDWRLVDDVVKQQQFAEHIQARAKALAQTSDRPAGAKGVKLTTLERTVDEKGYHYEFVDATIDADGRTVTLTVRAPAAVTAKTAAEIEAQGIKWWPLQMARELDDAILNLRTNHLDVGLWQLRTEGDAQVVLDIDATIDANRDNWFVRETIGMLRRTLARIDVSSRSLYALIEPGSCFAGTLLEIALAADRSYMLDAAEAKNVVGLSAMNFGTFPMVNGLSRIDARFYQEEAPVAAVKAKQGSLLSPAEAMELGLVTAIPDDLDWAEEVRIAIEERAALSPDALTGLEANLRFGPVETMNTRIFGRLSAWQNWIFNRPNAVGENGALKLFGSGKKAQFDWNRV.

Belongs to the benzoyl-CoA oxygenase component C family. Homodimer.

The catalysed reaction is 2,3-epoxy-2,3-dihydrobenzoyl-CoA + 2 H2O = (3Z)-6-oxohex-3-enoyl-CoA + formate + H(+). Functionally, catalyzes the ring opening of 2,3-epoxy-2,3-dihydroxybenzoyl-CoA to form 3,4-didehydroadipyl-CoA semialdehyde. The protein is Benzoyl-CoA-dihydrodiol lyase (boxC) of Aromatoleum evansii (Azoarcus evansii).